Here is a 384-residue protein sequence, read N- to C-terminus: 3,7-dimethylxanthine N-methyltransferase 2 (384 aa).

The S-adenosyl-L-homocysteine site is built by Y18, C61, N66, D100, L101, S139, F140, and C156. Theobromine is bound at residue Y157. C158 contacts S-adenosyl-L-homocysteine. Theobromine is bound by residues H160 and W161. N178 is a binding site for Mg(2+). Residue S237 participates in theobromine binding. Residues D260, F262, and N263 each contribute to the Mg(2+) site. Y368 provides a ligand contact to theobromine.

The protein belongs to the methyltransferase superfamily. Type-7 methyltransferase family. The cofactor is Mg(2+). As to expression, highly expressed in developing endosperm. Detected in young leaves and flower buds. Present in immature fruits (grains), but barely in mature fruits.

It catalyses the reaction 7-methylxanthine + S-adenosyl-L-methionine = theobromine + S-adenosyl-L-homocysteine + H(+). The catalysed reaction is theobromine + S-adenosyl-L-methionine = caffeine + S-adenosyl-L-homocysteine + H(+). The enzyme catalyses 1,7-dimethylxanthine + S-adenosyl-L-methionine = caffeine + S-adenosyl-L-homocysteine + H(+). Its pathway is alkaloid biosynthesis. Its function is as follows. Involved in the biosynthesis of caffeine. Catalyzes the conversion of 7-methylxanthine (7mX) to theobromine and of theobromine to caffeine. Has 1-N-methylation activity. The protein is 3,7-dimethylxanthine N-methyltransferase 2 of Coffea arabica (Arabian coffee).